Reading from the N-terminus, the 77-residue chain is Putative antitoxin VapB3 (77 aa).

The stretch at 10 to 60 (RRGLKKELEELGINYAEAVRKFLEELVARERRRRALERARALREELRKKGA) forms a coiled coil.

As to quaternary structure, forms a complex with putative toxin VapC3, possibly VapB(2)-VapC(2).

Antitoxin component of a type II toxin-antitoxin (TA) system. The polypeptide is Putative antitoxin VapB3 (vAPb3) (Pyrobaculum aerophilum (strain ATCC 51768 / DSM 7523 / JCM 9630 / CIP 104966 / NBRC 100827 / IM2)).